Consider the following 544-residue polypeptide: Chaperonin GroEL (544 aa).

ATP is bound by residues 29 to 32 (TLGP), 86 to 90 (DGTTT), Gly-413, 476 to 478 (NAL), and Asp-492.

Belongs to the chaperonin (HSP60) family. In terms of assembly, forms a cylinder of 14 subunits composed of two heptameric rings stacked back-to-back. Interacts with the co-chaperonin GroES.

Its subcellular location is the cytoplasm. The enzyme catalyses ATP + H2O + a folded polypeptide = ADP + phosphate + an unfolded polypeptide.. Together with its co-chaperonin GroES, plays an essential role in assisting protein folding. The GroEL-GroES system forms a nano-cage that allows encapsulation of the non-native substrate proteins and provides a physical environment optimized to promote and accelerate protein folding. This Desulfitobacterium hafniense (strain Y51) protein is Chaperonin GroEL.